Consider the following 103-residue polypeptide: uncharacterized protein (103 aa).

Positions 38–51 (TTTTSSTTSASTTS) are enriched in low complexity. The segment at 38–70 (TTTTSSTTSASTTSQPSFSLPTSCNSNSPQSNL) is disordered. Positions 52–70 (QPSFSLPTSCNSNSPQSNL) are enriched in polar residues.

This is an uncharacterized protein from Dictyostelium discoideum (Social amoeba).